Reading from the N-terminus, the 496-residue chain is Glycerol kinase (496 aa).

Thr-12 contacts ADP. The ATP site is built by Thr-12, Thr-13, and Ser-14. A sn-glycerol 3-phosphate-binding site is contributed by Thr-12. Residue Arg-16 coordinates ADP. Residues Arg-82, Glu-83, and Tyr-134 each coordinate sn-glycerol 3-phosphate. Glycerol is bound by residues Arg-82, Glu-83, and Tyr-134. His-230 bears the Phosphohistidine; by HPr mark. Asp-244 provides a ligand contact to sn-glycerol 3-phosphate. Glycerol contacts are provided by Asp-244 and Gln-245. The ADP site is built by Thr-266 and Gly-309. ATP-binding residues include Thr-266, Gly-309, Gln-313, and Gly-410. Residues Gly-410 and Asn-414 each coordinate ADP.

This sequence belongs to the FGGY kinase family. Homotetramer and homodimer (in equilibrium). The phosphoenolpyruvate-dependent sugar phosphotransferase system (PTS), including enzyme I, and histidine-containing protein (HPr) are required for the phosphorylation, which leads to the activation of the enzyme.

It carries out the reaction glycerol + ATP = sn-glycerol 3-phosphate + ADP + H(+). The protein operates within polyol metabolism; glycerol degradation via glycerol kinase pathway; sn-glycerol 3-phosphate from glycerol: step 1/1. Activated by phosphorylation and inhibited by fructose 1,6-bisphosphate (FBP). In terms of biological role, key enzyme in the regulation of glycerol uptake and metabolism. Catalyzes the phosphorylation of glycerol to yield sn-glycerol 3-phosphate. The sequence is that of Glycerol kinase from Bacillus cytotoxicus (strain DSM 22905 / CIP 110041 / 391-98 / NVH 391-98).